A 413-amino-acid chain; its full sequence is 2,3-bisphosphoglycerate-independent phosphoglycerate mutase (413 aa).

It belongs to the BPG-independent phosphoglycerate mutase family. A-PGAM subfamily.

It carries out the reaction (2R)-2-phosphoglycerate = (2R)-3-phosphoglycerate. Its pathway is carbohydrate degradation; glycolysis; pyruvate from D-glyceraldehyde 3-phosphate: step 3/5. Functionally, catalyzes the interconversion of 2-phosphoglycerate and 3-phosphoglycerate. The sequence is that of 2,3-bisphosphoglycerate-independent phosphoglycerate mutase from Metallosphaera sedula (strain ATCC 51363 / DSM 5348 / JCM 9185 / NBRC 15509 / TH2).